A 293-amino-acid chain; its full sequence is Pseudouridine-5'-phosphate glycosidase (293 aa).

Glu-21 functions as the Proton donor in the catalytic mechanism. Substrate-binding residues include Lys-81 and Val-101. Asp-130 lines the Mn(2+) pocket. Residue 132 to 134 (SQD) participates in substrate binding. The active-site Nucleophile is Lys-151.

This sequence belongs to the pseudouridine-5'-phosphate glycosidase family. In terms of assembly, homotrimer. It depends on Mn(2+) as a cofactor.

It carries out the reaction D-ribose 5-phosphate + uracil = psi-UMP + H2O. In terms of biological role, catalyzes the reversible cleavage of pseudouridine 5'-phosphate (PsiMP) to ribose 5-phosphate and uracil. Functions biologically in the cleavage direction, as part of a pseudouridine degradation pathway. This chain is Pseudouridine-5'-phosphate glycosidase, found in Thermosipho africanus (strain TCF52B).